Here is a 302-residue protein sequence, read N- to C-terminus: Elongation factor Ts (302 aa).

An involved in Mg(2+) ion dislocation from EF-Tu region spans residues 80-83 (TDFV).

This sequence belongs to the EF-Ts family.

The protein localises to the cytoplasm. Its function is as follows. Associates with the EF-Tu.GDP complex and induces the exchange of GDP to GTP. It remains bound to the aminoacyl-tRNA.EF-Tu.GTP complex up to the GTP hydrolysis stage on the ribosome. In Methylibium petroleiphilum (strain ATCC BAA-1232 / LMG 22953 / PM1), this protein is Elongation factor Ts.